The following is a 243-amino-acid chain: CAVP-target protein (243 aa).

The tract at residues 1–22 (PKPPAEAKPAAKPAAPPAAANP) is disordered. The span at 7-20 (AKPAAKPAAPPAAA) shows a compositional bias: low complexity. An IQ domain is found at 35–62 (SAATRIQASFRMHKNRMALKEKSIPKFS). Ig-like C2-type domains follow at residues 59 to 150 (PKFS…LALE) and 151 to 243 (VPAK…VKVN).

Its function is as follows. This protein is the target of CAVP, which binds to it in a calcium-dependent manner. In Branchiostoma lanceolatum (Common lancelet), this protein is CAVP-target protein.